The following is a 620-amino-acid chain: Glutathione-regulated potassium-efflux system protein KefC (620 aa).

12 helical membrane-spanning segments follow: residues 4–24, 26–46, 54–74, 90–110, 114–134, 149–169, 178–198, 218–238, 270–290, 294–314, 327–347, and 359–379; these read HTLIQALIYLGSAALIVPIAV, LGLGSVLGYLIAGCIIGPWGL, SILHFAEIGVVLMLFIIGLEL, GALQMVICGGLLGLFCMLLGL, VAELIGMTLALSSTAIAMQAM, FAVLLFQDIAAIPLVAMIPLL, MGAFVLSALKVAGALALVVLL, VFSAVALFLVFGFGLLLEEVG, GLLLGLFFIGVGMSIDFGTLI, LRIVILLLGFLIIKIAMLWLI, WFAVLLGQGSEFAFVVFGAAQ, and SLTLAVALSMAATPILLVILN. The region spanning 399-518 is the RCK N-terminal domain; that stretch reads QPRVIIAGFG…AGVEKPERET (120 aa). Residues 597 to 620 form a disordered region; the sequence is GWQGTEEGKHTGNMADEPETKPSS.

This sequence belongs to the monovalent cation:proton antiporter 2 (CPA2) transporter (TC 2.A.37) family. KefC subfamily. In terms of assembly, homodimer. Interacts with the regulatory subunit KefF.

It is found in the cell inner membrane. In terms of biological role, pore-forming subunit of a potassium efflux system that confers protection against electrophiles. Catalyzes K(+)/H(+) antiport. This chain is Glutathione-regulated potassium-efflux system protein KefC, found in Escherichia coli O45:K1 (strain S88 / ExPEC).